The following is a 147-amino-acid chain: Phospholipase A2 inhibitor subunit A (147 aa).

One can recognise a C-type lectin domain in the interval 62-143 (EICEEAGGHI…DENLLVVCEF (82 aa)). 2 disulfides stabilise this stretch: Cys-64-Cys-141 and Cys-119-Cys-133. An N-linked (GlcNAc...) asparagine glycan is attached at Asn-103.

Belongs to the alpha-type phospholipase A2 inhibitor family. As to quaternary structure, homo- or heterotrimer; homotrimer of PLI-A chains, two PLI-A and one PLI-B chains, one PLI-A and two PLI-B chains, and homotrimer of PLI-B chains (with a ratio of 1:3:3:1). As to expression, expressed by the liver.

It is found in the secreted. Its function is as follows. PLI binds directly phospholipase A2 in the presence or absence of calcium. Inhibitory activity of the PLI-A homotrimer is more specific than that of the PLI-B homotrimer. This Protobothrops flavoviridis (Habu) protein is Phospholipase A2 inhibitor subunit A.